Consider the following 400-residue polypeptide: Argininosuccinate synthase (400 aa).

ATP-binding positions include 10-18 (AYSGGVDTS) and alanine 38. An L-citrulline-binding site is contributed by tyrosine 89. Glycine 119 is an ATP binding site. The L-aspartate site is built by threonine 121, asparagine 125, and aspartate 126. Asparagine 125 lines the L-citrulline pocket. Residues arginine 129, serine 177, serine 186, glutamate 262, and tyrosine 274 each coordinate L-citrulline.

This sequence belongs to the argininosuccinate synthase family. Type 1 subfamily. Homotetramer.

The protein localises to the cytoplasm. It carries out the reaction L-citrulline + L-aspartate + ATP = 2-(N(omega)-L-arginino)succinate + AMP + diphosphate + H(+). It functions in the pathway amino-acid biosynthesis; L-arginine biosynthesis; L-arginine from L-ornithine and carbamoyl phosphate: step 2/3. This is Argininosuccinate synthase from Trichormus variabilis (strain ATCC 29413 / PCC 7937) (Anabaena variabilis).